Consider the following 209-residue polypeptide: dITP/XTP pyrophosphatase (209 aa).

Residue 7–12 (SSHGYK) participates in substrate binding. Aspartate 70 acts as the Proton acceptor in catalysis. Aspartate 70 provides a ligand contact to Mg(2+). Substrate-binding positions include serine 71, 154–157 (FGYD), lysine 177, and 182–183 (HR).

The protein belongs to the HAM1 NTPase family. As to quaternary structure, homodimer. The cofactor is Mg(2+).

It catalyses the reaction XTP + H2O = XMP + diphosphate + H(+). The catalysed reaction is dITP + H2O = dIMP + diphosphate + H(+). The enzyme catalyses ITP + H2O = IMP + diphosphate + H(+). Functionally, pyrophosphatase that catalyzes the hydrolysis of nucleoside triphosphates to their monophosphate derivatives, with a high preference for the non-canonical purine nucleotides XTP (xanthosine triphosphate), dITP (deoxyinosine triphosphate) and ITP. Seems to function as a house-cleaning enzyme that removes non-canonical purine nucleotides from the nucleotide pool, thus preventing their incorporation into DNA/RNA and avoiding chromosomal lesions. The polypeptide is dITP/XTP pyrophosphatase (Chlamydia muridarum (strain MoPn / Nigg)).